Consider the following 135-residue polypeptide: Retinol-binding protein 1 (135 aa).

Residues 22–32 (RALDVNVALRK) are important for interaction with STRA6. 3 residues coordinate all-trans-retinol: Lys-41, Met-63, and Gln-109.

The protein belongs to the calycin superfamily. Fatty-acid binding protein (FABP) family. As to quaternary structure, interacts (only as retinol-free apoprotein) with STRA6.

Its subcellular location is the cytoplasm. It is found in the lipid droplet. Functionally, cytoplasmic retinol-binding protein. Accepts retinol from the transport protein STRA6, and thereby contributes to retinol uptake, storage and retinoid homeostasis. This Mus musculus (Mouse) protein is Retinol-binding protein 1 (Rbp1).